The chain runs to 373 residues: 3-isopropylmalate dehydrogenase (373 aa).

Position 82–93 (82–93 (GPKWGTGALRPE)) interacts with NAD(+). Positions 100, 110, 139, and 231 each coordinate substrate. The Mg(2+) site is built by aspartate 231, aspartate 256, and aspartate 260. 295 to 306 (GSAPDLPANKVN) is an NAD(+) binding site.

The protein belongs to the isocitrate and isopropylmalate dehydrogenases family. Homodimer. Requires Mg(2+) as cofactor. Mn(2+) serves as cofactor.

It is found in the cytoplasm. The catalysed reaction is (2R,3S)-3-isopropylmalate + NAD(+) = 4-methyl-2-oxopentanoate + CO2 + NADH. Its pathway is amino-acid biosynthesis; L-leucine biosynthesis; L-leucine from 3-methyl-2-oxobutanoate: step 3/4. Catalyzes the oxidation of 3-carboxy-2-hydroxy-4-methylpentanoate (3-isopropylmalate) to 3-carboxy-4-methyl-2-oxopentanoate. The product decarboxylates to 4-methyl-2 oxopentanoate. This Candida maltosa (Yeast) protein is 3-isopropylmalate dehydrogenase (LEU2).